The following is a 777-amino-acid chain: Aminopeptidase P (777 aa).

The first 17 residues, methionine 1–histidine 17, serve as a signal peptide directing secretion. Position 551 (histidine 551) interacts with substrate. 2 residues coordinate Mn(2+): aspartate 570 and aspartate 581. Residue histidine 640 coordinates substrate. Histidine 644 provides a ligand contact to Mn(2+). Histidine 653 serves as a coordination point for substrate. Positions 676 and 690 each coordinate Mn(2+).

This sequence belongs to the peptidase M24B family. Homodimer. Mn(2+) is required as a cofactor. In terms of processing, the N-terminus may be proteolytically cleaved to generate a 73-kDa mature form.

It localises to the vacuole lumen. The protein localises to the cytoplasm. The catalysed reaction is Release of any N-terminal amino acid, including proline, that is linked to proline, even from a dipeptide or tripeptide.. Partially activated by Co(2+) and Mg(2+) has no effect. Inhibited by 1 mM Zn(2+), Ni(2+), or Cu(2+). Inhibited by apstatin, a non-hydrolysable peptide analog. In terms of biological role, catalyzes the removal of a penultimate prolyl residue from the N-termini of peptides. In the food vacuole, involved in the final step of host hemoglobin catabolism, by cleaving hemoglobin-derived oligopeptides. In the cytoplasm, may be involved in the last steps of the turnover of ubiquitinated proteins. The protein is Aminopeptidase P of Plasmodium falciparum (isolate 3D7).